We begin with the raw amino-acid sequence, 563 residues long: Putative cysteine ligase BshC (563 aa).

Belongs to the BshC family.

The polypeptide is Putative cysteine ligase BshC (Chlorobium phaeobacteroides (strain BS1)).